Consider the following 372-residue polypeptide: Aminomethyltransferase (372 aa).

Belongs to the GcvT family. In terms of assembly, the glycine cleavage system is composed of four proteins: P, T, L and H.

It carries out the reaction N(6)-[(R)-S(8)-aminomethyldihydrolipoyl]-L-lysyl-[protein] + (6S)-5,6,7,8-tetrahydrofolate = N(6)-[(R)-dihydrolipoyl]-L-lysyl-[protein] + (6R)-5,10-methylene-5,6,7,8-tetrahydrofolate + NH4(+). The glycine cleavage system catalyzes the degradation of glycine. This chain is Aminomethyltransferase, found in Streptomyces coelicolor (strain ATCC BAA-471 / A3(2) / M145).